Consider the following 211-residue polypeptide: Nucleoside triphosphate pyrophosphatase (211 aa).

The active-site Proton acceptor is the aspartate 75.

This sequence belongs to the Maf family. A divalent metal cation serves as cofactor.

The protein resides in the cytoplasm. The enzyme catalyses a ribonucleoside 5'-triphosphate + H2O = a ribonucleoside 5'-phosphate + diphosphate + H(+). It carries out the reaction a 2'-deoxyribonucleoside 5'-triphosphate + H2O = a 2'-deoxyribonucleoside 5'-phosphate + diphosphate + H(+). Its function is as follows. Nucleoside triphosphate pyrophosphatase. May have a dual role in cell division arrest and in preventing the incorporation of modified nucleotides into cellular nucleic acids. This is Nucleoside triphosphate pyrophosphatase from Prochlorococcus marinus (strain NATL1A).